The chain runs to 348 residues: Phosphate acyltransferase (348 aa).

The protein belongs to the PlsX family. As to quaternary structure, homodimer. Probably interacts with PlsY.

The protein localises to the cytoplasm. It catalyses the reaction a fatty acyl-[ACP] + phosphate = an acyl phosphate + holo-[ACP]. It functions in the pathway lipid metabolism; phospholipid metabolism. Catalyzes the reversible formation of acyl-phosphate (acyl-PO(4)) from acyl-[acyl-carrier-protein] (acyl-ACP). This enzyme utilizes acyl-ACP as fatty acyl donor, but not acyl-CoA. This chain is Phosphate acyltransferase, found in Rhizobium leguminosarum bv. trifolii (strain WSM2304).